Consider the following 86-residue polypeptide: Large ribosomal subunit protein uL23 (86 aa).

This sequence belongs to the universal ribosomal protein uL23 family. In terms of assembly, part of the 50S ribosomal subunit. Contacts protein L29.

Functionally, binds to 23S rRNA. One of the proteins that surrounds the polypeptide exit tunnel on the outside of the ribosome. In Pyrococcus furiosus (strain ATCC 43587 / DSM 3638 / JCM 8422 / Vc1), this protein is Large ribosomal subunit protein uL23.